The following is a 582-amino-acid chain: Protein NRT1/ PTR FAMILY 5.2 (582 aa).

11 helical membrane passes run 77-97 (WVGT…ALLG), 100-120 (ITFV…TLSV), 141-161 (ASVL…IGTG), 189-209 (FFNW…TVLV), 217-237 (WTLG…IFLL), 334-354 (PVLF…TLFV), 370-390 (IPPA…IVLY), 408-428 (ITLL…MIVA), 452-472 (LPLT…ADSF), 493-515 (GTSY…LSTV), and 538-558 (YYYL…LVVV).

Belongs to the major facilitator superfamily. Proton-dependent oligopeptide transporter (POT/PTR) (TC 2.A.17) family. In terms of tissue distribution, expressed in roots. Detected in shoots, leaves and flowers.

Its subcellular location is the membrane. In terms of biological role, peptide transporter involved in stress tolerance in seeds during germination and in defense against virulent bacterial pathogens. This is Protein NRT1/ PTR FAMILY 5.2 (NPF5.2) from Arabidopsis thaliana (Mouse-ear cress).